A 244-amino-acid chain; its full sequence is B3 domain-containing protein At2g36080 (244 aa).

A DNA-binding region (TF-B3) is located at residues 38-144; it reads FEKPLTPSDV…RFFIGWRRRG (107 aa).

It is found in the nucleus. This Arabidopsis thaliana (Mouse-ear cress) protein is B3 domain-containing protein At2g36080 (ARF31).